The sequence spans 173 residues: Small ribosomal subunit protein uS5 (173 aa).

In terms of domain architecture, S5 DRBM spans 17 to 80; that stretch reads WQERVIQIRR…ADGKKQLIEV (64 aa).

Belongs to the universal ribosomal protein uS5 family. As to quaternary structure, part of the 30S ribosomal subunit. Contacts proteins S4 and S8.

Functionally, with S4 and S12 plays an important role in translational accuracy. Located at the back of the 30S subunit body where it stabilizes the conformation of the head with respect to the body. This is Small ribosomal subunit protein uS5 from Gloeothece citriformis (strain PCC 7424) (Cyanothece sp. (strain PCC 7424)).